The chain runs to 627 residues: Phosphomethylpyrimidine synthase (627 aa).

A compositionally biased stretch (polar residues) spans 1–24; sequence MSATQKNNITRLEQLDRQSTQPFP. The tract at residues 1–29 is disordered; it reads MSATQKNNITRLEQLDRQSTQPFPNSRKV. Substrate-binding positions include asparagine 231, methionine 260, tyrosine 289, histidine 325, 345 to 347, 386 to 389, and glutamate 425; these read SRG and DGLR. Residue histidine 429 coordinates Zn(2+). A substrate-binding site is contributed by tyrosine 452. Histidine 493 provides a ligand contact to Zn(2+). Residues cysteine 573, cysteine 576, and cysteine 581 each coordinate [4Fe-4S] cluster.

This sequence belongs to the ThiC family. In terms of assembly, homodimer. [4Fe-4S] cluster serves as cofactor.

It catalyses the reaction 5-amino-1-(5-phospho-beta-D-ribosyl)imidazole + S-adenosyl-L-methionine = 4-amino-2-methyl-5-(phosphooxymethyl)pyrimidine + CO + 5'-deoxyadenosine + formate + L-methionine + 3 H(+). The protein operates within cofactor biosynthesis; thiamine diphosphate biosynthesis. Catalyzes the synthesis of the hydroxymethylpyrimidine phosphate (HMP-P) moiety of thiamine from aminoimidazole ribotide (AIR) in a radical S-adenosyl-L-methionine (SAM)-dependent reaction. This is Phosphomethylpyrimidine synthase from Pseudomonas aeruginosa (strain UCBPP-PA14).